Consider the following 96-residue polypeptide: Muconolactone Delta-isomerase 2 (96 aa).

It belongs to the muconolactone Delta-isomerase family. As to quaternary structure, homodecamer.

It carries out the reaction (S)-muconolactone = (4,5-dihydro-5-oxofuran-2-yl)-acetate. It participates in aromatic compound metabolism; beta-ketoadipate pathway; 5-oxo-4,5-dihydro-2-furylacetate from catechol: step 3/3. In Acinetobacter lwoffii, this protein is Muconolactone Delta-isomerase 2 (catC2).